A 499-amino-acid chain; its full sequence is Serine/threonine-protein phosphatase 5 (499 aa).

The segment at 1 to 23 is disordered; it reads MAMAEGERTECAEPPRDEPPAEG. The residue at position 2 (Ala2) is an N-acetylalanine. TPR repeat units follow at residues 28–61, 62–95, and 96–129; these read AEEL…NPSN, AIYY…DKKY, and IKGY…KPND. The catalytic stretch occupies residues 200 to 499; the sequence is DQKKLHRKCA…ANTLLQLGMM (300 aa). Residues Asp242, His244, and Asp271 each coordinate Mg(2+). His244 is a substrate binding site. Residues Arg275 and 303–304 contribute to the substrate site; that span reads NH. Asn303 lines the Mg(2+) pocket. His304 functions as the Proton donor/acceptor in the catalytic mechanism. Residue His352 participates in Mg(2+) binding. Substrate is bound by residues Arg400 and His427. His427 contacts Mg(2+). Positions 495 to 499 are required for autoinhibition; the sequence is QLGMM.

The protein belongs to the PPP phosphatase family. PP-5 (PP-T) subfamily. Probably forms a complex composed of chaperones HSP90 and HSP70, co-chaperones STIP1/HOP, CDC37, PPP5C, PTGES3/p23, TSC1 and client protein TSC2. Probably forms a complex composed of chaperones HSP90 and HSP70, co-chaperones CDC37, PPP5C, TSC1 and client protein TSC2, CDK4, AKT, RAF1 and NR3C1; this complex does not contain co-chaperones STIP1/HOP and PTGES3/p23. Part of a complex with HSP90/HSP90AA1 and steroid receptors. Interacts (via TPR repeats) with HSP90AA1 (via TPR repeat-binding motif) or HSPA1A/HSPA1B; the interaction is direct and activates the phosphatase activity. Dissociates from HSPA1A/HSPA1B and HSP90AA1 in response to arachidonic acid. Interacts with CPNE1 (via VWFA domain). Interacts with CDC16, CDC27. Interacts with KLHDC10 (via the 6 Kelch repeats); inhibits the phosphatase activity on MAP3K5. Interacts with ATM and ATR; both interactions are induced by DNA damage and enhance ATM and ATR kinase activity. Interacts with RAD17; reduced by DNA damage. Interacts with nuclear receptors such as NR3C1/GCR and PPARG (activated by agonist); regulates their transactivation activities. Interacts (via TPR repeats) with S100 proteins S100A1, S100A2, S100A6, S100B and S100P; the interactions are calcium-dependent, strongly activate PPP5C phosphatase activity and compete with HSP90AA1 and MAP3K5 interactions. Interacts with SMAD2 and SMAD3 but not with SMAD1; decreases SMAD3 phosphorylation and protein levels. Interacts (via TPR repeats) with CRY1 and CRY2; the interaction with CRY2 down-regulates the phosphatase activity on CSNK1E. Interacts (via TPR repeats) with the active form of RAC1, GNA12 or GNA13; these interactions activate the phosphatase activity and translocate PPP5C to the cell membrane. Interacts with FLCN. Mg(2+) is required as a cofactor. Requires Mn(2+) as cofactor. Post-translationally, activated by at least two different proteolytic cleavages producing a 56 kDa and a 50 kDa form. In terms of tissue distribution, predominantly found in brain and, in lower levels, in testis, but was nearly undetectable in spleen, lung, skeletal muscle, kidney and liver.

Its subcellular location is the nucleus. It is found in the cytoplasm. The protein resides in the cell membrane. It carries out the reaction O-phospho-L-seryl-[protein] + H2O = L-seryl-[protein] + phosphate. It catalyses the reaction O-phospho-L-threonyl-[protein] + H2O = L-threonyl-[protein] + phosphate. With respect to regulation, autoinhibited. In the autoinhibited state, the TPR domain interacts with the catalytic region and prevents substrate access to the catalytic pocket. Allosterically activated by various polyunsaturated fatty acids, free long-chain fatty-acids and long-chain fatty acyl-CoA esters, arachidonic acid being the most effective activator. HSP90A and probably RAC1, GNA12 and GNA13 can also release the autoinhibition by the TPR repeat. Activation by RAC1, GNA12 and GNA13 is synergistic with the one produced by fatty acids binding. Inhibited by okadaic acid. Serine/threonine-protein phosphatase that dephosphorylates a myriad of proteins involved in different signaling pathways including the kinases CSNK1E, ASK1/MAP3K5, PRKDC and RAF1, the nuclear receptors NR3C1, PPARG, ESR1 and ESR2, SMAD proteins and TAU/MAPT. Implicated in wide ranging cellular processes, including apoptosis, differentiation, DNA damage response, cell survival, regulation of ion channels or circadian rhythms, in response to steroid and thyroid hormones, calcium, fatty acids, TGF-beta as well as oxidative and genotoxic stresses. Participates in the control of DNA damage response mechanisms such as checkpoint activation and DNA damage repair through, for instance, the regulation ATM/ATR-signaling and dephosphorylation of PRKDC and TP53BP1. Inhibits ASK1/MAP3K5-mediated apoptosis induced by oxidative stress. Plays a positive role in adipogenesis, mainly through the dephosphorylation and activation of PPARG transactivation function. Also dephosphorylates and inhibits the anti-adipogenic effect of NR3C1. Regulates the circadian rhythms, through the dephosphorylation and activation of CSNK1E. May modulate TGF-beta signaling pathway by the regulation of SMAD3 phosphorylation and protein expression levels. Dephosphorylates and may play a role in the regulation of TAU/MAPT. Through their dephosphorylation, may play a role in the regulation of ions channels such as KCNH2. Dephosphorylate FNIP1, disrupting interaction with HSP90AA1/Hsp90. The chain is Serine/threonine-protein phosphatase 5 (Ppp5c) from Rattus norvegicus (Rat).